The sequence spans 1516 residues: Mediator of RNA polymerase II transcription subunit 14 (1516 aa).

Disordered regions lie at residues 22–98 (LSSQ…EVPA) and 1434–1516 (MHRQ…YPPQ). The segment covering 34–47 (SPAAPISPAPSGSA) has biased composition (low complexity). Over residues 72 to 83 (SEVDVKSIHSSD) the composition is skewed to basic and acidic residues. A compositionally biased stretch (low complexity) spans 1463–1473 (SHQQHMMNPGS). Residues 1474–1483 (VGPGSVGGPG) are compositionally biased toward gly residues. Residues 1502-1516 (QSYHHPLHHQQYPPQ) are compositionally biased toward low complexity.

It belongs to the Mediator complex subunit 14 family. Component of the Mediator complex.

The protein localises to the nucleus. Functionally, component of the Mediator complex, a coactivator involved in the regulated transcription of nearly all RNA polymerase II-dependent genes. Mediator functions as a bridge to convey information from gene-specific regulatory proteins to the basal RNA polymerase II transcription machinery. Mediator is recruited to promoters by direct interactions with regulatory proteins and serves as a scaffold for the assembly of a functional preinitiation complex with RNA polymerase II and the general transcription factors. Required for transcription in the embryo and for phosphorylation of the RNA polymerase II C-terminal domain repeat. The polypeptide is Mediator of RNA polymerase II transcription subunit 14 (rgr-1) (Caenorhabditis elegans).